Consider the following 510-residue polypeptide: Probable gamma-aminobutyrate transaminase 3, mitochondrial (510 aa).

The transit peptide at 1-41 (MICRSLLLLRSNAASKASSIVKHVAATGCLPEYSSEAPARY) directs the protein to the mitochondrion. A pyridoxal 5'-phosphate-binding site is contributed by 166–167 (GS). Y199 provides a ligand contact to substrate. Residue D306 coordinates pyridoxal 5'-phosphate. K335 provides a ligand contact to substrate. At K335 the chain carries N6-(pyridoxal phosphate)lysine.

It belongs to the class-III pyridoxal-phosphate-dependent aminotransferase family.

Its subcellular location is the mitochondrion. The enzyme catalyses 4-aminobutanoate + pyruvate = succinate semialdehyde + L-alanine. It catalyses the reaction 4-aminobutanoate + glyoxylate = succinate semialdehyde + glycine. Transaminase that degrades gamma-amino butyric acid (GABA). This chain is Probable gamma-aminobutyrate transaminase 3, mitochondrial, found in Oryza sativa subsp. indica (Rice).